The sequence spans 373 residues: UDP-N-acetylglucosamine--N-acetylmuramyl-(pentapeptide) pyrophosphoryl-undecaprenol N-acetylglucosamine transferase (373 aa).

Residues 14-16, N128, R165, S199, and Q295 contribute to the UDP-N-acetyl-alpha-D-glucosamine site; that span reads TAG.

The protein belongs to the glycosyltransferase 28 family. MurG subfamily.

Its subcellular location is the cell membrane. The enzyme catalyses di-trans,octa-cis-undecaprenyl diphospho-N-acetyl-alpha-D-muramoyl-L-alanyl-D-glutamyl-meso-2,6-diaminopimeloyl-D-alanyl-D-alanine + UDP-N-acetyl-alpha-D-glucosamine = di-trans,octa-cis-undecaprenyl diphospho-[N-acetyl-alpha-D-glucosaminyl-(1-&gt;4)]-N-acetyl-alpha-D-muramoyl-L-alanyl-D-glutamyl-meso-2,6-diaminopimeloyl-D-alanyl-D-alanine + UDP + H(+). It functions in the pathway cell wall biogenesis; peptidoglycan biosynthesis. Cell wall formation. Catalyzes the transfer of a GlcNAc subunit on undecaprenyl-pyrophosphoryl-MurNAc-pentapeptide (lipid intermediate I) to form undecaprenyl-pyrophosphoryl-MurNAc-(pentapeptide)GlcNAc (lipid intermediate II). The chain is UDP-N-acetylglucosamine--N-acetylmuramyl-(pentapeptide) pyrophosphoryl-undecaprenol N-acetylglucosamine transferase from Mycobacterium sp. (strain KMS).